The chain runs to 156 residues: Small ribosomal subunit protein uS7 (156 aa).

It belongs to the universal ribosomal protein uS7 family. In terms of assembly, part of the 30S ribosomal subunit. Contacts proteins S9 and S11.

In terms of biological role, one of the primary rRNA binding proteins, it binds directly to 16S rRNA where it nucleates assembly of the head domain of the 30S subunit. Is located at the subunit interface close to the decoding center, probably blocks exit of the E-site tRNA. This is Small ribosomal subunit protein uS7 from Proteus mirabilis (strain HI4320).